The chain runs to 435 residues: MKKEGIEGTERFLSPGKGRGLKAIKHFKVGDLVFACPAYAYVLTVNERGGRCECCFTRKEGLSKCGKCKQAYYCNVECQRGDWPMHKLECSAMCAYGENWCPSETVRLVARIILKQKHQTERTPSERVLTLRELEAHLDKLDNEKNEMNDTDIAALHHFYSRHLDFPDNAALTELIAQVNCNGFTIEDEELSHLGSALFPDVALMNHSCSPNVIVTYKGTVAEVRAVQEINPEEEIFNSYIDLLYPTEDRIERLKDSYFFNCDCKECTSKSKDEAKMEIRQKLSIPPEEEEIKQMVIYARNVIEEFRRAKHYKTPSELLEICELSMEKMGAIFAETNVYMLHMMYQAMGVCLYMQDWDGAMKYGEKIIHPYSVHYPPYSLNVASMYLKLGRLYLGLEKRTQGVKALKKALAIMDIAHGKDHPYIDEIKKEMEEQT.

Residues 7–241 (EGTERFLSPG…PEEEIFNSYI (235 aa)) enclose the SET domain. 17-19 (KGR) contributes to the S-adenosyl-L-methionine binding site. Residues Cys52, Cys55, Cys65, Cys68, Cys74, Cys78, His86, and Cys90 each contribute to the Zn(2+) site. Residues 52–90 (CECCFTRKEGLSKCGKCKQAYYCNVECQRGDWPMHKLEC) form an MYND-type zinc finger. S-adenosyl-L-methionine is bound by residues His137, 206 to 207 (NH), and 258 to 260 (YFF).

This sequence belongs to the class V-like SAM-binding methyltransferase superfamily.

The protein resides in the cytoplasm. Its subcellular location is the cytosol. It is found in the nucleus. The catalysed reaction is L-lysyl(4)-[histone H3] + 3 S-adenosyl-L-methionine = N(6),N(6),N(6)-trimethyl-L-lysyl(4)-[histone H3] + 3 S-adenosyl-L-homocysteine + 3 H(+). The enzyme catalyses L-lysyl-[protein] + S-adenosyl-L-methionine = N(6)-methyl-L-lysyl-[protein] + S-adenosyl-L-homocysteine + H(+). Protein-lysine N-methyltransferase that methylates both histones and non-histone proteins, including p53/TP53 and RB1. Specifically trimethylates histone H3 'Lys-4' (H3K4me3) in vivo. The activity requires interaction with HSP90alpha. Shows even higher methyltransferase activity on p53/TP53. Monomethylates 'Lys-370' of p53/TP53, leading to decreased DNA-binding activity and subsequent transcriptional regulation activity of p53/TP53. Monomethylates RB1 at 'Lys-860'. The protein is N-lysine methyltransferase SMYD2-A (smyd2a) of Danio rerio (Zebrafish).